A 450-amino-acid polypeptide reads, in one-letter code: Flavin-containing monooxygenase FMO GS-OX-like 5 (450 aa).

17–22 (GAGPAG) is an FAD binding site. 215 to 220 (GNSSSA) is a binding site for NADP(+).

Belongs to the FMO family. FAD serves as cofactor.

Catalyzes the conversion of methylthioalkyl glucosinolates of any chain length into methylsulfinylalkyl glucosinolates. The polypeptide is Flavin-containing monooxygenase FMO GS-OX-like 5 (Arabidopsis thaliana (Mouse-ear cress)).